Here is a 73-residue protein sequence, read N- to C-terminus: uncharacterized protein (73 aa).

Positions 8–63 (MLTRIKSVYMFIQEKGLVTTQELVDEFGITPRTIQRDLNVLAYNDLVHSPSRGKWE) constitute an HTH deoR-type domain. A DNA-binding region (H-T-H motif) is located at residues 25 to 44 (VTTQELVDEFGITPRTIQRD).

This is an uncharacterized protein from Bacillus subtilis (strain 168).